A 568-amino-acid chain; its full sequence is Probable asparagine--tRNA ligase, cytoplasmic (568 aa).

Belongs to the class-II aminoacyl-tRNA synthetase family.

The protein resides in the cytoplasm. The catalysed reaction is tRNA(Asn) + L-asparagine + ATP = L-asparaginyl-tRNA(Asn) + AMP + diphosphate + H(+). Cytosolic asparaginyl-tRNA synthetase which catalyzes the specific attachment of asparagine to its cognate tRNA. The sequence is that of Probable asparagine--tRNA ligase, cytoplasmic (nrs1) from Schizosaccharomyces pombe (strain 972 / ATCC 24843) (Fission yeast).